The following is a 371-amino-acid chain: Cytochrome b (371 aa).

Helical transmembrane passes span 25–45 (FGSMLLACSSMQVLTGFFLAV), 69–90 (WLMQNLHAIGASMFFICIYTHI), 105–125 (WLSGTTLLIMLMATAFFGYVL), and 170–190 (FFALHFILPFGIISLSSLHIM). His75 and His89 together coordinate heme b. Heme b contacts are provided by His174 and His188. His193 contacts a ubiquinone. 4 consecutive transmembrane segments (helical) span residues 218-238 (YKDMLMLSLMVLALLTTVAFF), 280-300 (LGGALALVMSIMILLTTPFTH), 312-332 (IMQFMFWTLVATFTVITWAAT), and 339-358 (FTAISQAASTMYFMFFITNP).

It belongs to the cytochrome b family. As to quaternary structure, the cytochrome bc1 complex contains 3 respiratory subunits (MT-CYB, CYC1 and UQCRFS1), 2 core proteins (UQCRC1 and UQCRC2) and probably 6 low-molecular weight proteins. The cofactor is heme b.

The protein localises to the mitochondrion inner membrane. Component of the ubiquinol-cytochrome c reductase complex (complex III or cytochrome b-c1 complex) that is part of the mitochondrial respiratory chain. The b-c1 complex mediates electron transfer from ubiquinol to cytochrome c. Contributes to the generation of a proton gradient across the mitochondrial membrane that is then used for ATP synthesis. The chain is Cytochrome b (MT-CYB) from Eryx colubrinus loveridgei.